Here is a 185-residue protein sequence, read N- to C-terminus: Phospholipase A2 inhibitor 25 kDa subunit (185 aa).

Disulfide bonds link C3-C27, C6-C13, C20-C48, C54-C75, C76-C81, C101-C126, C119-C146, and C152-C172.

Belongs to the CNF-like-inhibitor family. In terms of assembly, heterodimer with phospholipase A2 inhibitor 31 kDa. As to expression, expressed by the liver.

Its subcellular location is the secreted. Its function is as follows. Inhibits the enzymatic activity of phospholipase A2. The polypeptide is Phospholipase A2 inhibitor 25 kDa subunit (Naja kaouthia (Monocled cobra)).